The following is a 212-amino-acid chain: Ion-translocating oxidoreductase complex subunit G (212 aa).

The chain crosses the membrane as a helical span at residues 9-29 (GFLLALFALICTGLVAAVNQQ). The residue at position 176 (Thr-176) is an FMN phosphoryl threonine.

This sequence belongs to the RnfG family. In terms of assembly, the complex is composed of six subunits: RnfA, RnfB, RnfC, RnfD, RnfE and RnfG. FMN serves as cofactor.

The protein resides in the cell inner membrane. In terms of biological role, part of a membrane-bound complex that couples electron transfer with translocation of ions across the membrane. The chain is Ion-translocating oxidoreductase complex subunit G from Shewanella baltica (strain OS223).